Here is a 106-residue protein sequence, read N- to C-terminus: ATP-dependent Clp protease adapter protein ClpS (106 aa).

The protein belongs to the ClpS family. In terms of assembly, binds to the N-terminal domain of the chaperone ClpA.

Involved in the modulation of the specificity of the ClpAP-mediated ATP-dependent protein degradation. The sequence is that of ATP-dependent Clp protease adapter protein ClpS from Aliivibrio fischeri (strain ATCC 700601 / ES114) (Vibrio fischeri).